We begin with the raw amino-acid sequence, 106 residues long: Insulin-like peptide 04 (106 aa).

The first 22 residues, 1–22, serve as a signal peptide directing secretion; the sequence is MPRTFLVVLIYILAGFLCSTSA. Residues 23–37 constitute a propeptide that is removed on maturation; it reads LRKVNEASGIKTDGS. Intrachain disulfides connect Cys-45–Cys-50, Cys-46–Cys-80, and Cys-59–Cys-68. Positions 86–106 are cleaved as a propeptide — c peptide; the sequence is RRKRSLTVDKREAKKFIRQRR.

Belongs to the insulin family.

The protein localises to the secreted. Insulin decreases blood glucose concentration. May have evolved to activate insulin receptors (INSR) in vertebrates. Molecular docking studies reveals unique interaction with the human insulin receptor. In vivo, insulin-like peptide injection reduces blood glucose levels in two models of zebrafish diabetes (streptozotocin- and glucose-induced). Also shorter swimming distance of zebrafish larvae, an effect which is not observed with human insulin. The chain is Insulin-like peptide 04 from Exaiptasia diaphana (Tropical sea anemone).